Consider the following 359-residue polypeptide: MRKIIHIDMDCYFAAVEMRDFPELRGKPIAVGGRSDRRGVISTCSYEARKFGVRSAMSSYHALQLCPQLILVPGRMEVYKSVSLQIREIFHRYTDLVEPLSLDEAYLDVTDCDAHQGSATLIAKTIRDEIFEVTGLTASAGIAPIKFLAKIASDLNKPNGQYVITPNQIADFVKDLPLSKIPGVGKVTSKKLADIGLTTCYDVQQYPKVQLIEAFGKFGHVLAERAQGIDSRQISPHRVRKSVGVETTLAKDIFTLEQCHQVLPQLIQELSTRVRRSAKDRQIHKQVVKLKFNDFKQTTIEHRSDEISINLFHELLLQALQRSQGRGIRLVGVSVGLADVTLASSESSVDQITQLDLQF.

Residues 4–185 (IIHIDMDCYF…LPLSKIPGVG (182 aa)) enclose the UmuC domain. Positions 8 and 103 each coordinate Mg(2+). Glu-104 is a catalytic residue.

Belongs to the DNA polymerase type-Y family. In terms of assembly, monomer. It depends on Mg(2+) as a cofactor.

The protein localises to the cytoplasm. It catalyses the reaction DNA(n) + a 2'-deoxyribonucleoside 5'-triphosphate = DNA(n+1) + diphosphate. Functionally, poorly processive, error-prone DNA polymerase involved in untargeted mutagenesis. Copies undamaged DNA at stalled replication forks, which arise in vivo from mismatched or misaligned primer ends. These misaligned primers can be extended by PolIV. Exhibits no 3'-5' exonuclease (proofreading) activity. May be involved in translesional synthesis, in conjunction with the beta clamp from PolIII. This is DNA polymerase IV from Shewanella frigidimarina (strain NCIMB 400).